A 437-amino-acid polypeptide reads, in one-letter code: ATP-dependent RNA helicase RhlB (437 aa).

The Q motif signature appears at 9 to 37; that stretch reads QKFADLGLEPTVLEGLDAQGFHYCTPIQA. Positions 40–219 constitute a Helicase ATP-binding domain; that stretch reads LPVVLTGQDI…FEHMNSPESV (180 aa). ATP is bound at residue 53–60; sequence AQTGTGKT. Positions 165 to 168 match the DEAD box motif; it reads DEAD. The Helicase C-terminal domain maps to 245-390; the sequence is RLLQTLIEEE…LSKYNSEALL (146 aa). The segment at 395 to 437 is disordered; that stretch reads APLRLQRTPRQGGNRRPNGNRQGQGQSRPRNNNRRHPQSQKQQ. Over residues 400-424 the composition is skewed to low complexity; it reads QRTPRQGGNRRPNGNRQGQGQSRPR. Residues 425-437 show a composition bias toward basic residues; it reads NNNRRHPQSQKQQ.

Belongs to the DEAD box helicase family. RhlB subfamily. Component of the RNA degradosome, which is a multiprotein complex involved in RNA processing and mRNA degradation.

Its subcellular location is the cytoplasm. The catalysed reaction is ATP + H2O = ADP + phosphate + H(+). Its function is as follows. DEAD-box RNA helicase involved in RNA degradation. Has RNA-dependent ATPase activity and unwinds double-stranded RNA. This is ATP-dependent RNA helicase RhlB from Photobacterium profundum (strain SS9).